Reading from the N-terminus, the 521-residue chain is Bifunctional purine biosynthesis protein PurH (521 aa).

The MGS-like domain maps to 1–147 (MAKITRALIS…KNNADVTVLV (147 aa)).

The protein belongs to the PurH family.

The enzyme catalyses (6R)-10-formyltetrahydrofolate + 5-amino-1-(5-phospho-beta-D-ribosyl)imidazole-4-carboxamide = 5-formamido-1-(5-phospho-D-ribosyl)imidazole-4-carboxamide + (6S)-5,6,7,8-tetrahydrofolate. The catalysed reaction is IMP + H2O = 5-formamido-1-(5-phospho-D-ribosyl)imidazole-4-carboxamide. It participates in purine metabolism; IMP biosynthesis via de novo pathway; 5-formamido-1-(5-phospho-D-ribosyl)imidazole-4-carboxamide from 5-amino-1-(5-phospho-D-ribosyl)imidazole-4-carboxamide (10-formyl THF route): step 1/1. It functions in the pathway purine metabolism; IMP biosynthesis via de novo pathway; IMP from 5-formamido-1-(5-phospho-D-ribosyl)imidazole-4-carboxamide: step 1/1. This chain is Bifunctional purine biosynthesis protein PurH, found in Geobacter sulfurreducens (strain ATCC 51573 / DSM 12127 / PCA).